The following is a 294-amino-acid chain: Single-stranded nucleic acid-binding protein (294 aa).

Positions 1–30 (MSAEIEEATNAVNNLSINDSEQQPRAPTHK) are disordered. Ser2 carries the N-acetylserine modification. Residues Ser2 and Ser16 each carry the phosphoserine modification. Residues 10–25 (NAVNNLSINDSEQQPR) show a composition bias toward polar residues. Positions 37–119 (DTIFIGNVAH…REIHIKRART (83 aa)) constitute an RRM 1 domain. Residue Thr49 is modified to Phosphothreonine. Ser66 carries the post-translational modification Phosphoserine. A phosphothreonine mark is found at Thr91 and Thr119. At Arg125 the chain carries Omega-N-methylarginine. The interval 131–151 (RGGFRGRGGFRGGFRGGYRGG) is RNA-binding RGG-box. Arg135, Arg137, and Arg141 each carry dimethylated arginine. Position 145 is a dimethylated arginine; alternate (Arg145). Omega-N-methylarginine; alternate is present on Arg145. Arg149 carries the post-translational modification Omega-N-methylarginine. Over residues 151 to 169 (GFRGRGNFRGRGGARGGFN) the composition is skewed to gly residues. Residues 151-171 (GFRGRGNFRGRGGARGGFNGQ) are disordered. Dimethylated arginine occurs at positions 153, 155, and 159. Arg161 and Arg165 each carry dimethylated arginine; alternate. Arg161 and Arg165 each carry omega-N-methylarginine; alternate. The 89-residue stretch at 186–274 (DTLYINNVPF…RELTVDVAVI (89 aa)) folds into the RRM 2 domain. The residue at position 242 (Thr242) is a Phosphothreonine. Ser244 carries the post-translational modification Phosphoserine. The interval 275 to 294 (RPENDEEEIEQETGSEEKQE) is disordered. The segment covering 278–288 (NDEEEIEQETG) has biased composition (acidic residues). Thr287 carries the phosphothreonine modification. Ser289 is subject to Phosphoserine.

The protein belongs to the RRM GAR family. In terms of assembly, associated with snR10 and snR11 small nuclear RNAs.

It localises to the cytoplasm. The protein resides in the nucleus. The protein localises to the nucleolus. It is found in the P-body. Its subcellular location is the stress granule. In terms of biological role, functions in the transition of mRNAs from translation to an mRNP complex destined for decapping. High-copy-number suppressor of decapping defects. Overexpression suppresses decapping defects in both DCP1-2 and DCP2-7 mutations. Acts to promote translational repression of mRNA in conjunction with DHH1 and subsequent mRNA localization to P bodies. Promotes translational repression of mRNA during glucose deprivation. This chain is Single-stranded nucleic acid-binding protein (SBP1), found in Saccharomyces cerevisiae (strain ATCC 204508 / S288c) (Baker's yeast).